The primary structure comprises 74 residues: MALTKEQKQEIIKQNSRFAKDTGSSEVQIAILSAEIKQLSEHLKQHPHDFHSKRGLFMKNSKRRDLVKYLANQN.

Belongs to the universal ribosomal protein uS15 family. As to quaternary structure, part of the 30S ribosomal subunit. Forms a bridge to the 50S subunit in the 70S ribosome, contacting the 23S rRNA.

In terms of biological role, one of the primary rRNA binding proteins, it binds directly to 16S rRNA where it helps nucleate assembly of the platform of the 30S subunit by binding and bridging several RNA helices of the 16S rRNA. Forms an intersubunit bridge (bridge B4) with the 23S rRNA of the 50S subunit in the ribosome. This is Small ribosomal subunit protein uS15 from Onion yellows phytoplasma (strain OY-M).